Here is a 619-residue protein sequence, read N- to C-terminus: Chaperone protein HscA homolog (619 aa).

Belongs to the heat shock protein 70 family.

In terms of biological role, chaperone involved in the maturation of iron-sulfur cluster-containing proteins. Has a low intrinsic ATPase activity which is markedly stimulated by HscB. This Shewanella denitrificans (strain OS217 / ATCC BAA-1090 / DSM 15013) protein is Chaperone protein HscA homolog.